Reading from the N-terminus, the 330-residue chain is Tetraacyldisaccharide 4'-kinase (330 aa).

T58–T65 serves as a coordination point for ATP.

It belongs to the LpxK family.

It carries out the reaction a lipid A disaccharide + ATP = a lipid IVA + ADP + H(+). It functions in the pathway glycolipid biosynthesis; lipid IV(A) biosynthesis; lipid IV(A) from (3R)-3-hydroxytetradecanoyl-[acyl-carrier-protein] and UDP-N-acetyl-alpha-D-glucosamine: step 6/6. Functionally, transfers the gamma-phosphate of ATP to the 4'-position of a tetraacyldisaccharide 1-phosphate intermediate (termed DS-1-P) to form tetraacyldisaccharide 1,4'-bis-phosphate (lipid IVA). This chain is Tetraacyldisaccharide 4'-kinase, found in Shewanella halifaxensis (strain HAW-EB4).